The sequence spans 216 residues: Ras-related protein RABE1d (216 aa).

22–29 contacts GTP; sequence GDSGVGKS. The short motif at 44–52 is the Effector region element; the sequence is FITTIGIDF. GTP contacts are provided by residues 70-74, 128-131, and 159-160; these read DTAGQ, NKAD, and SA. Positions 196-216 are disordered; that stretch reads TKQDTAASSSTAEKSACCSYV. Low complexity predominate over residues 200 to 216; that stretch reads TAASSSTAEKSACCSYV. S-geranylgeranyl cysteine attachment occurs at residues cysteine 212 and cysteine 213.

Belongs to the small GTPase superfamily. Rab family. As to quaternary structure, interacts with PI5K2.

It localises to the golgi apparatus membrane. It is found in the cell membrane. Involved in membrane trafficking from the Golgi to the plasma membrane. In Arabidopsis thaliana (Mouse-ear cress), this protein is Ras-related protein RABE1d (RABE1D).